We begin with the raw amino-acid sequence, 291 residues long: MGRILNRTVLMTLLVVTMAGTAFSGSFNEEFDLTWGEHRGKIFSGGKMLSLSLDRVSGSGFKSKKEYLFGRIDMQLKLVAGNSAGTVTAYYLSSEGPTHDEIDFEFLGNETGKPYVLHTNVFAQGKGNREQQFYLWFDPTKNFHTYSLVWRPQHIIFMVDNVPIRVFNNAEQLGVPFPKNQPMKIYSSLWNADDWATRGGLVKTDWSKAPFTAYYRGFNAAACTVSSGSSFCDPKFKSSFTNGESQVANELNAYGRRRLRWVQKYFMIYDYCSDLKRFPQGFPPECRKSRV.

An N-terminal signal peptide occupies residues 1-24 (MGRILNRTVLMTLLVVTMAGTAFS). In terms of domain architecture, GH16 spans 25-215 (GSFNEEFDLT…WSKAPFTAYY (191 aa)). Catalysis depends on glutamate 101, which acts as the Nucleophile. The active-site Proton donor is the glutamate 105. Position 105 (glutamate 105) interacts with xyloglucan. An N-linked (GlcNAc...) asparagine glycan is attached at asparagine 109. Residues 118–120 (HTN), 128–130 (NRE), 194–195 (DW), and glycine 199 each bind xyloglucan. Disulfide bonds link cysteine 223/cysteine 232 and cysteine 272/cysteine 286. Xyloglucan is bound at residue arginine 277.

This sequence belongs to the glycosyl hydrolase 16 family. XTH group 2 subfamily. Contains at least one intrachain disulfide bond essential for its enzymatic activity.

Its subcellular location is the secreted. It localises to the cell wall. It is found in the extracellular space. The protein resides in the apoplast. It catalyses the reaction breaks a beta-(1-&gt;4) bond in the backbone of a xyloglucan and transfers the xyloglucanyl segment on to O-4 of the non-reducing terminal glucose residue of an acceptor, which can be a xyloglucan or an oligosaccharide of xyloglucan.. Catalyzes xyloglucan endohydrolysis (XEH) and/or endotransglycosylation (XET). Cleaves and religates xyloglucan polymers, an essential constituent of the primary cell wall, and thereby participates in cell wall construction of growing tissues. The polypeptide is Probable xyloglucan endotransglucosylase/hydrolase protein 16 (XTH16) (Arabidopsis thaliana (Mouse-ear cress)).